The primary structure comprises 297 residues: Alpha-tubulin N-acetyltransferase 1 (297 aa).

An N-acetyltransferase domain is found at 1-184; sequence MDFPYDLNAL…NNFVVFAGFF (184 aa). Acetyl-CoA-binding positions include 118–131 and 154–163; these read FYVTETLQRHGYGS and SPKFLSFLEK. Residues 226–297 are disordered; the sequence is FVRPGGPPHS…SLNRSRLSFH (72 aa). Residues 230–240 are compositionally biased toward pro residues; the sequence is GGPPHSPPLLP. The span at 241-264 shows a compositional bias: low complexity; it reads SSPQSRSLSVGSSPSRAPLRPAAA. Composition is skewed to polar residues over residues 266–278 and 286–297; these read VLQQGQTPSSPLN and TSSLNRSRLSFH.

It belongs to the acetyltransferase ATAT1 family. In terms of assembly, monomer.

It is found in the cytoplasm. The protein localises to the membrane. The protein resides in the clathrin-coated pit. It localises to the cell junction. Its subcellular location is the focal adhesion. It is found in the cell projection. The protein localises to the axon. The protein resides in the cytoskeleton. It localises to the spindle. The catalysed reaction is L-lysyl-[alpha-tubulin] + acetyl-CoA = N(6)-acetyl-L-lysyl-[alpha-tubulin] + CoA + H(+). Functionally, specifically acetylates 'Lys-40' in alpha-tubulin on the lumenal side of microtubules. Promotes microtubule destabilization and accelerates microtubule dynamics; this activity may be independent of acetylation activity. Acetylates alpha-tubulin with a slow enzymatic rate, due to a catalytic site that is not optimized for acetyl transfer. Enters the microtubule through each end and diffuses quickly throughout the lumen of microtubules. Acetylates only long/old microtubules because of its slow acetylation rate since it does not have time to act on dynamically unstable microtubules before the enzyme is released. May be involved in neuron development. Acetylates alpha-tubulin in neurons, but not in cilia. The protein is Alpha-tubulin N-acetyltransferase 1 of Danio rerio (Zebrafish).